A 968-amino-acid polypeptide reads, in one-letter code: Leucine--tRNA ligase (968 aa).

A compositionally biased stretch (polar residues) spans 1–13 (MTETPTGTQSSRE). The interval 1-22 (MTETPTGTQSSRETAADDTPRH) is disordered. The 'HIGH' region motif lies at 75 to 86 (PYPSGEGLHVGH). The short motif at 741–745 (KIGKS) is the 'KMSKS' region element. Lysine 744 provides a ligand contact to ATP.

Belongs to the class-I aminoacyl-tRNA synthetase family.

The protein resides in the cytoplasm. It catalyses the reaction tRNA(Leu) + L-leucine + ATP = L-leucyl-tRNA(Leu) + AMP + diphosphate. The chain is Leucine--tRNA ligase from Mycolicibacterium vanbaalenii (strain DSM 7251 / JCM 13017 / BCRC 16820 / KCTC 9966 / NRRL B-24157 / PYR-1) (Mycobacterium vanbaalenii).